The sequence spans 414 residues: Histidine--tRNA ligase (414 aa).

It belongs to the class-II aminoacyl-tRNA synthetase family. In terms of assembly, homodimer.

It localises to the cytoplasm. The catalysed reaction is tRNA(His) + L-histidine + ATP = L-histidyl-tRNA(His) + AMP + diphosphate + H(+). The chain is Histidine--tRNA ligase from Anaeromyxobacter sp. (strain K).